The primary structure comprises 214 residues: Small ribosomal subunit protein eS1 (214 aa).

Belongs to the eukaryotic ribosomal protein eS1 family.

In Aeropyrum pernix (strain ATCC 700893 / DSM 11879 / JCM 9820 / NBRC 100138 / K1), this protein is Small ribosomal subunit protein eS1.